The chain runs to 224 residues: Beta-casein (224 aa).

Residues 1-15 (MKVLILACLVALALA) form the signal peptide. Residues Ser30, Ser32, Ser33, and Ser34 each carry the phosphoserine modification. Ser50 carries the post-translational modification Phosphoserine; in variant A1, variant A2, variant A3, variant B, variant E, variant F, variant G and variant H.

It belongs to the beta-casein family. In terms of tissue distribution, mammary gland specific. Secreted in milk.

It is found in the secreted. Its function is as follows. Important role in determination of the surface properties of the casein micelles. Casoparan acts as a macrophage activator, increasing the phagocytic activity of macrophages and peroxide release from macrophages. It also acts as a bradykinin-potentiating peptide. In terms of biological role, casohypotensin acts as a bradykinin-potentiating peptide. Induces hypotension in rats. Acts as a strong competitive inhibitor of endo-oligopeptidase A. Functionally, antioxidant peptide has antioxidant activity. This is Beta-casein (CSN2) from Bos taurus (Bovine).